The primary structure comprises 387 residues: 3-ketoacyl-CoA thiolase (387 aa).

Catalysis depends on C91, which acts as the Acyl-thioester intermediate. Catalysis depends on proton acceptor residues H343 and C373.

The protein belongs to the thiolase-like superfamily. Thiolase family. As to quaternary structure, heterotetramer of two alpha chains (FadB) and two beta chains (FadA).

It is found in the cytoplasm. The catalysed reaction is an acyl-CoA + acetyl-CoA = a 3-oxoacyl-CoA + CoA. Its pathway is lipid metabolism; fatty acid beta-oxidation. Functionally, catalyzes the final step of fatty acid oxidation in which acetyl-CoA is released and the CoA ester of a fatty acid two carbons shorter is formed. Involved in the aerobic and anaerobic degradation of long-chain fatty acids. The sequence is that of 3-ketoacyl-CoA thiolase from Escherichia coli O6:H1 (strain CFT073 / ATCC 700928 / UPEC).